Consider the following 133-residue polypeptide: Profilin-4 (133 aa).

The cysteines at positions 13 and 117 are disulfide-linked. Residues 83 to 99 carry the Involved in PIP2 interaction motif; the sequence is AVIRGKKGSGGITIKKT. Threonine 113 carries the post-translational modification Phosphothreonine.

The protein belongs to the profilin family. In terms of assembly, occurs in many kinds of cells as a complex with monomeric actin in a 1:1 ratio. Phosphorylated by MAP kinases.

It localises to the cytoplasm. The protein resides in the cytoskeleton. Its function is as follows. Binds to actin and affects the structure of the cytoskeleton. At high concentrations, profilin prevents the polymerization of actin, whereas it enhances it at low concentrations. The polypeptide is Profilin-4 (Corylus avellana (European hazel)).